Reading from the N-terminus, the 853-residue chain is Rod cGMP-specific 3',5'-cyclic phosphodiesterase subunit beta (853 aa).

At Ser2 the chain carries N-acetylserine. GAF domains lie at 71–220 (NMER…TLNL) and 252–429 (DIER…GWSV). The PDEase domain maps to 481–814 (EEDELGKILK…KEWKALADEY (334 aa)). Residue His557 is the Proton donor of the active site. A divalent metal cation is bound by residues His561, His597, Asp598, and Asp718. At Cys850 the chain carries Cysteine methyl ester. Cys850 carries the S-geranylgeranyl cysteine lipid modification. Positions 851–853 (RIL) are cleaved as a propeptide — removed in mature form.

The protein belongs to the cyclic nucleotide phosphodiesterase family. As to quaternary structure, oligomer composed of two catalytic chains (alpha and beta), an inhibitory chain (gamma) and the delta chain. A divalent metal cation serves as cofactor.

It is found in the membrane. Its subcellular location is the cell projection. It localises to the cilium. The protein resides in the photoreceptor outer segment. It catalyses the reaction 3',5'-cyclic GMP + H2O = GMP + H(+). Functionally, necessary for the formation of a functional phosphodiesterase holoenzyme. Involved in retinal circadian rhythm photoentrainment via modulation of UVA and orange light-induced phase-shift of the retina clock. May participate in processes of transmission and amplification of the visual signal. Its function is as follows. Rod-specific cGMP phosphodiesterase that catalyzes the hydrolysis of 3',5'-cyclic GMP. Necessary for the formation of a functional phosphodiesterase holoenzyme. Involved in retinal circadian rhythm photoentrainment via modulation of UVA and orange light-induced phase-shift of the retina clock. May participate in processes of transmission and amplification of the visual signal. In Bos taurus (Bovine), this protein is Rod cGMP-specific 3',5'-cyclic phosphodiesterase subunit beta (PDE6B).